Here is a 353-residue protein sequence, read N- to C-terminus: Guanine nucleotide-binding protein subunit alpha (353 aa).

Positions 1–26 (MGCGMSVEEKEGKARNEEIENQLKRD) are disordered. Residue Gly-2 is the site of N-myristoyl glycine attachment. Cys-3 carries S-palmitoyl cysteine lipidation. Residues 7–26 (VEEKEGKARNEEIENQLKRD) are compositionally biased toward basic and acidic residues. The G-alpha domain occupies 32–353 (NEIKMLLLGA…QENLRLCGLI (322 aa)). Positions 35–48 (KMLLLGAGESGKST) are G1 motif. Positions 43, 44, 45, 46, 47, 48, 150, 175, 181, 203, 269, 270, 272, and 325 each coordinate GTP. Ser-47 is a binding site for Mg(2+). A G2 motif region spans residues 173 to 181 (DVLRSRVKT). Mg(2+) is bound at residue Thr-181. The tract at residues 196 to 205 (YRMFDVGGQR) is G3 motif. The G4 motif stretch occupies residues 265 to 272 (ILFLNKID). Residues 323–328 (TCATDT) form a G5 motif region.

Belongs to the G-alpha family. G(q) subfamily. As to quaternary structure, g proteins are composed of 3 units; alpha, beta and gamma. The alpha chain contains the guanine nucleotide binding site. Mg(2+) is required as a cofactor.

In terms of biological role, guanine nucleotide-binding proteins (G proteins) are involved as modulators or transducers in various transmembrane signaling systems. This chain is Guanine nucleotide-binding protein subunit alpha (SSG-1), found in Sporothrix schenckii (strain ATCC 58251 / de Perez 2211183) (Rose-picker's disease fungus).